Reading from the N-terminus, the 445-residue chain is Gasdermin-A (445 aa).

Residues M1–G251 form a triggers pyroptosis region. R9–R13 contributes to the a cardiolipin binding site. 4 consecutive transmembrane segments (beta stranded) span residues N78–V95, V99–V120, V163–F179, and L183–I197.

It belongs to the gasdermin family. As to quaternary structure, homooligomer; homooligomeric ring-shaped pore complex containing 18-36 subunits when inserted in the membrane. Cleavage by S.pyogenes SpeB relieves autoinhibition by releasing the N-terminal moiety (Gasdermin-A, N-terminal) that initiates pyroptosis. Post-translationally, palmitoylated. As to expression, expressed predominantly in the gastrointestinal tract and, at a lower level, in the skin. Also detected in mammary gland. In the gastrointestinal tract, mainly expressed in differentiated cells, including the differentiated cell layer of esophagus and mucus-secreting pit cells of the gastric epithelium. Down-regulated in gastric cancer cells.

It is found in the cytoplasm. It localises to the perinuclear region. The protein localises to the cytosol. The protein resides in the cell membrane. With respect to regulation, the full-length protein before cleavage is inactive: intramolecular interactions between N- and C-terminal domains mediate autoinhibition in the absence of activation signal. The intrinsic pyroptosis-inducing activity is carried by the released N-terminal moiety (Gasdermin-A, N-terminal) following cleavage by S.pyogenes effector protein SpeB. This form constitutes the precursor of the pore-forming protein and acts as a sensor of infection: upon infection by S.pyogenes, specifically cleaved by S.pyogenes effector protein SpeB in epithelial cells, releasing the N-terminal moiety (Gasdermin-A, N-terminal) that binds to membranes and forms pores, triggering pyroptosis. Its function is as follows. Pore-forming protein that causes membrane permeabilization and pyroptosis. Released upon cleavage by S.pyogenes effector protein SpeB, and binds to membrane inner leaflet lipids. Homooligomerizes within the membrane and forms pores of 10-15 nanometers (nm) of inner diameter, triggering pyroptosis. Pyroptosis triggers the elimination of the infected skin cell, depriving the pathogen of its protective niche, while inducing an inflammatory response. This ultimately prevents bacterial penetration of the epithelial barrier and a subsequent systemic dissemination of the pathogen. Binds to cardiolipin and other acidic phospholipids, such as phosphatidylserine, which mediate its targeting to the inner leaflet membrane. The sequence is that of Gasdermin-A from Homo sapiens (Human).